The chain runs to 419 residues: MDKKPLDVLISATGLWMSRTGTLHKIKHHEVSRSKIYIEMACGDHLVVNNSRSCRTARAFRHHKYRKTCKRCRVSDEDINNFLTRSTESKNSVKVRVVSAPKVKKAMPKSVSRAPKPLENSVSAKASTNTSRSVPSPAKSTPNSSVPASAPAPSLTRSQLDRVEALLSPEDKISLNMAKPFRELEPELVTRRKNDFQRLYTNDREDYLGKLERDITKFFVDRGFLEIKSPILIPAEYVERMGINNDTELSKQIFRVDKNLCLRPMLAPTLYNYLRKLDRILPGPIKIFEVGPCYRKESDGKEHLEEFTMVNFCQMGSGCTRENLEALIKEFLDYLEIDFEIVGDSCMVYGDTLDIMHGDLELSSAVVGPVSLDREWGIDKPWIGAGFGLERLLKVMHGFKNIKRASRSESYYNGISTNL.

Residues A100–R157 are disordered. The span at N120–T141 shows a compositional bias: polar residues. Residues P142–S154 are compositionally biased toward low complexity.

It belongs to the class-II aminoacyl-tRNA synthetase family.

It localises to the cytoplasm. It catalyses the reaction tRNA(Pyl) + L-pyrrolysine + ATP = L-pyrrolysyl-tRNA(Pyl) + AMP + diphosphate. Catalyzes the attachment of pyrrolysine to tRNA(Pyl). Pyrrolysine is a lysine derivative encoded by the termination codon UAG. The chain is Pyrrolysine--tRNA ligase (pylS) from Methanosarcina barkeri.